The sequence spans 110 residues: tRNA-binding protein YgjH (110 aa).

Positions 8 to 110 constitute a tRNA-binding domain; that stretch reads DFARLEMRVG…RMMPAGVRVV (103 aa).

As to quaternary structure, homodimer.

This is tRNA-binding protein YgjH (ygjH) from Escherichia coli (strain K12).